A 582-amino-acid chain; its full sequence is PTS system lactose-specific EIICB component (582 aa).

Positions 8-409 constitute a PTS EIIC type-3 domain; sequence IEKGKPFFEK…VVDVIIYYPF (402 aa). A run of 9 helical transmembrane segments spans residues 30–50, 64–84, 103–123, 137–157, 176–196, 222–242, 283–303, 339–359, and 381–401; these read GFIA…ITYV, GILM…VAGT, INFI…AADP, KGLL…NFFV, VFKD…LDLL, GWIG…VGIH, FVAT…FMWL, VFFI…KFFV, and IVMG…LIVV. The disordered stretch occupies residues 453-473; sequence ASEADTDDTSSVDETTSTSST. Residues 464–473 show a composition bias toward low complexity; the sequence is VDETTSTSST. A PTS EIIB type-3 domain is found at 479-582; that stretch reads QTNVLVLCAG…LEFVKQQFNN (104 aa). The active-site Phosphocysteine intermediate; for EIIB activity is the Cys-486. Cys-486 carries the post-translational modification Phosphocysteine; by EIIA.

It is found in the cell membrane. The catalysed reaction is lactose(out) + N(pros)-phospho-L-histidyl-[protein] = lactose 6-phosphate(in) + L-histidyl-[protein]. Functionally, the phosphoenolpyruvate-dependent sugar phosphotransferase system (sugar PTS), a major carbohydrate active transport system, catalyzes the phosphorylation of incoming sugar substrates concomitantly with their translocation across the cell membrane. The enzyme II LacEF PTS system is involved in lactose transport. In Staphylococcus epidermidis (strain ATCC 35984 / DSM 28319 / BCRC 17069 / CCUG 31568 / BM 3577 / RP62A), this protein is PTS system lactose-specific EIICB component.